Consider the following 531-residue polypeptide: Phosphomethylpyrimidine synthase (531 aa).

Residues Asn-167, Met-196, Tyr-225, His-261, 281 to 283, 322 to 325, and Glu-361 each bind substrate; these read SRG and DALR. His-365 is a binding site for Zn(2+). Tyr-388 provides a ligand contact to substrate. Residue His-429 coordinates Zn(2+). The [4Fe-4S] cluster site is built by Cys-511, Cys-514, and Cys-519.

The protein belongs to the ThiC family. [4Fe-4S] cluster is required as a cofactor.

It carries out the reaction 5-amino-1-(5-phospho-beta-D-ribosyl)imidazole + S-adenosyl-L-methionine = 4-amino-2-methyl-5-(phosphooxymethyl)pyrimidine + CO + 5'-deoxyadenosine + formate + L-methionine + 3 H(+). The protein operates within cofactor biosynthesis; thiamine diphosphate biosynthesis. In terms of biological role, catalyzes the synthesis of the hydroxymethylpyrimidine phosphate (HMP-P) moiety of thiamine from aminoimidazole ribotide (AIR) in a radical S-adenosyl-L-methionine (SAM)-dependent reaction. This is Phosphomethylpyrimidine synthase from Chlorobium chlorochromatii (strain CaD3).